Reading from the N-terminus, the 785-residue chain is Phenylalanine--tRNA ligase beta subunit (785 aa).

A tRNA-binding domain is found at 39-147; it reads FPIPRGVVFA…DALPPGTPLA (109 aa). The B5 domain occupies 399-474; sequence KPPEAIPFRP…RIQGYETIPL (76 aa). D452, D458, E461, and E462 together coordinate Mg(2+). The FDX-ACB domain occupies 688-780; that stretch reads SRHPAAFRDL…ALRARGFGLR (93 aa).

Belongs to the phenylalanyl-tRNA synthetase beta subunit family. Type 1 subfamily. Tetramer of two alpha and two beta subunits. Mg(2+) serves as cofactor.

Its subcellular location is the cytoplasm. It catalyses the reaction tRNA(Phe) + L-phenylalanine + ATP = L-phenylalanyl-tRNA(Phe) + AMP + diphosphate + H(+). This is Phenylalanine--tRNA ligase beta subunit from Thermus thermophilus (strain ATCC BAA-163 / DSM 7039 / HB27).